Reading from the N-terminus, the 261-residue chain is MKHIARKRFGQHFLTDGAMIEAIVDAIGPRPGQAMVEIGPGLAALTQPLVERLGQLTVIELDRDLAARLRAHPQLVVIESDVLKVDFAQVAQALTTTKLRVVGNLPYNISTPILFHLLNFIDVIEDQHFMLQKEVIDRMVAGPCTAAYGRLSVMLQWRYAMENVLLVPPESFEPPPRVNSAVVRMVPHVNPAAVDGHLLSELVQVAFSQRRKLLRHTLGQWLQQKGYADEFDVQRRAEEVPVAEYLALALKLATHSQAASH.

S-adenosyl-L-methionine is bound by residues H12, L14, G39, E60, D81, and N104.

The protein belongs to the class I-like SAM-binding methyltransferase superfamily. rRNA adenine N(6)-methyltransferase family. RsmA subfamily.

Its subcellular location is the cytoplasm. The catalysed reaction is adenosine(1518)/adenosine(1519) in 16S rRNA + 4 S-adenosyl-L-methionine = N(6)-dimethyladenosine(1518)/N(6)-dimethyladenosine(1519) in 16S rRNA + 4 S-adenosyl-L-homocysteine + 4 H(+). In terms of biological role, specifically dimethylates two adjacent adenosines (A1518 and A1519) in the loop of a conserved hairpin near the 3'-end of 16S rRNA in the 30S particle. May play a critical role in biogenesis of 30S subunits. The polypeptide is Ribosomal RNA small subunit methyltransferase A (Albidiferax ferrireducens (strain ATCC BAA-621 / DSM 15236 / T118) (Rhodoferax ferrireducens)).